A 496-amino-acid chain; its full sequence is Glutamate--tRNA ligase (496 aa).

The 'HIGH' region motif lies at 10-20 (PSPTGPLHIGG). The short motif at 251 to 255 (KMSKR) is the 'KMSKS' region element. ATP is bound at residue lysine 254.

This sequence belongs to the class-I aminoacyl-tRNA synthetase family. Glutamate--tRNA ligase type 1 subfamily. In terms of assembly, monomer.

It is found in the cytoplasm. It carries out the reaction tRNA(Glu) + L-glutamate + ATP = L-glutamyl-tRNA(Glu) + AMP + diphosphate. Functionally, catalyzes the attachment of glutamate to tRNA(Glu) in a two-step reaction: glutamate is first activated by ATP to form Glu-AMP and then transferred to the acceptor end of tRNA(Glu). This is Glutamate--tRNA ligase from Heliobacterium modesticaldum (strain ATCC 51547 / Ice1).